A 241-amino-acid polypeptide reads, in one-letter code: Enolase-phosphatase E1 (241 aa).

Mg(2+) contacts are provided by D9 and E11. Substrate is bound by residues 133–134 (SS) and K172. Mg(2+) is bound at residue D198.

Belongs to the HAD-like hydrolase superfamily. MasA/MtnC family. Monomer. Mg(2+) serves as cofactor.

It localises to the cytoplasm. It is found in the nucleus. The catalysed reaction is 5-methylsulfanyl-2,3-dioxopentyl phosphate + H2O = 1,2-dihydroxy-5-(methylsulfanyl)pent-1-en-3-one + phosphate. It functions in the pathway amino-acid biosynthesis; L-methionine biosynthesis via salvage pathway; L-methionine from S-methyl-5-thio-alpha-D-ribose 1-phosphate: step 3/6. The protein operates within amino-acid biosynthesis; L-methionine biosynthesis via salvage pathway; L-methionine from S-methyl-5-thio-alpha-D-ribose 1-phosphate: step 4/6. In terms of biological role, bifunctional enzyme that catalyzes the enolization of 2,3-diketo-5-methylthiopentyl-1-phosphate (DK-MTP-1-P) into the intermediate 2-hydroxy-3-keto-5-methylthiopentenyl-1-phosphate (HK-MTPenyl-1-P), which is then dephosphorylated to form the acireductone 1,2-dihydroxy-3-keto-5-methylthiopentene (DHK-MTPene). The protein is Enolase-phosphatase E1 of Scheffersomyces stipitis (strain ATCC 58785 / CBS 6054 / NBRC 10063 / NRRL Y-11545) (Yeast).